The primary structure comprises 345 residues: Glycerol-3-phosphate dehydrogenase [NAD(P)+] (345 aa).

NADPH-binding residues include serine 11, tryptophan 12, histidine 32, arginine 33, and lysine 106. Lysine 106, glycine 137, and serine 139 together coordinate sn-glycerol 3-phosphate. NADPH is bound at residue alanine 141. Lysine 192, aspartate 245, serine 255, arginine 256, and asparagine 257 together coordinate sn-glycerol 3-phosphate. The active-site Proton acceptor is the lysine 192. Arginine 256 contacts NADPH. NADPH contacts are provided by valine 280 and glutamate 282.

Belongs to the NAD-dependent glycerol-3-phosphate dehydrogenase family.

It localises to the cytoplasm. It catalyses the reaction sn-glycerol 3-phosphate + NAD(+) = dihydroxyacetone phosphate + NADH + H(+). The enzyme catalyses sn-glycerol 3-phosphate + NADP(+) = dihydroxyacetone phosphate + NADPH + H(+). The protein operates within membrane lipid metabolism; glycerophospholipid metabolism. Its function is as follows. Catalyzes the reduction of the glycolytic intermediate dihydroxyacetone phosphate (DHAP) to sn-glycerol 3-phosphate (G3P), the key precursor for phospholipid synthesis. This is Glycerol-3-phosphate dehydrogenase [NAD(P)+] from Bacillus velezensis (strain DSM 23117 / BGSC 10A6 / LMG 26770 / FZB42) (Bacillus amyloliquefaciens subsp. plantarum).